The following is a 429-amino-acid chain: Phosphomethylpyrimidine synthase (429 aa).

Substrate contacts are provided by residues Asn66, Met94, Tyr123, His162, 184-186 (SRG), 225-228 (DALR), and Glu264. Residue His268 participates in Zn(2+) binding. Tyr291 provides a ligand contact to substrate. His332 contacts Zn(2+). Residues Cys408, Cys411, and Cys415 each coordinate [4Fe-4S] cluster.

Belongs to the ThiC family. [4Fe-4S] cluster is required as a cofactor.

The enzyme catalyses 5-amino-1-(5-phospho-beta-D-ribosyl)imidazole + S-adenosyl-L-methionine = 4-amino-2-methyl-5-(phosphooxymethyl)pyrimidine + CO + 5'-deoxyadenosine + formate + L-methionine + 3 H(+). The protein operates within cofactor biosynthesis; thiamine diphosphate biosynthesis. Its function is as follows. Catalyzes the synthesis of the hydroxymethylpyrimidine phosphate (HMP-P) moiety of thiamine from aminoimidazole ribotide (AIR) in a radical S-adenosyl-L-methionine (SAM)-dependent reaction. The sequence is that of Phosphomethylpyrimidine synthase from Sulfurisphaera tokodaii (strain DSM 16993 / JCM 10545 / NBRC 100140 / 7) (Sulfolobus tokodaii).